Consider the following 415-residue polypeptide: MNVLVIGAGGREHALAYKLNQSNLVKQEFVIPGNEAMTPIAEVHTEISESNHQGILDFAKQQNVDWVVIGPEQPLIDGLADILRANGFKVFGPNKQAAQIEGSKLFAKKIMKKYNIPTADYKEVERKKDALTYIENCELPVVVKKDGLAAGKGVIIADTIEAARSAIEIMYGDEEEGTVVFETFLEGEEFSLMTFVNGDLAVPFDCIAQDHKRAFDHDEGPNTGGMGAYCPVPHISDDVLKLTNETIAQPIAKAMLNEGYQFFGVLYIGAILTKDGPKVIEFNARFGDPEAQVLLSRMESDLMQHIIDLDEGKRTEFKWKNESIVGVMLASKGYPDAYEKGHKVSGFDLNENYFVSGLKKQGDTFVTSGGRVILAIGKGDNVQDAQRDAYEKVSQIQSDHLFYRHDIANKALQLK.

Residues 108–311 form the ATP-grasp domain; that stretch reads KKIMKKYNIP…LMQHIIDLDE (204 aa). 134–191 is a binding site for ATP; that stretch reads IENCELPVVVKKDGLAAGKGVIIADTIEAARSAIEIMYGDEEEGTVVFETFLEGEEFS. Mg(2+) contacts are provided by E281 and N283.

Belongs to the GARS family. The cofactor is Mg(2+). Mn(2+) is required as a cofactor.

The enzyme catalyses 5-phospho-beta-D-ribosylamine + glycine + ATP = N(1)-(5-phospho-beta-D-ribosyl)glycinamide + ADP + phosphate + H(+). The protein operates within purine metabolism; IMP biosynthesis via de novo pathway; N(1)-(5-phospho-D-ribosyl)glycinamide from 5-phospho-alpha-D-ribose 1-diphosphate: step 2/2. The sequence is that of Phosphoribosylamine--glycine ligase from Staphylococcus aureus (strain Mu50 / ATCC 700699).